The sequence spans 140 residues: Large ribosomal subunit protein bL17 (140 aa).

Belongs to the bacterial ribosomal protein bL17 family. Part of the 50S ribosomal subunit. Contacts protein L32.

The polypeptide is Large ribosomal subunit protein bL17 (Rhizorhabdus wittichii (strain DSM 6014 / CCUG 31198 / JCM 15750 / NBRC 105917 / EY 4224 / RW1) (Sphingomonas wittichii)).